Reading from the N-terminus, the 303-residue chain is UDP-3-O-acyl-N-acetylglucosamine deacetylase (303 aa).

3 residues coordinate Zn(2+): histidine 78, histidine 237, and aspartate 241. Histidine 264 functions as the Proton donor in the catalytic mechanism.

Belongs to the LpxC family. Requires Zn(2+) as cofactor.

The enzyme catalyses a UDP-3-O-[(3R)-3-hydroxyacyl]-N-acetyl-alpha-D-glucosamine + H2O = a UDP-3-O-[(3R)-3-hydroxyacyl]-alpha-D-glucosamine + acetate. It participates in glycolipid biosynthesis; lipid IV(A) biosynthesis; lipid IV(A) from (3R)-3-hydroxytetradecanoyl-[acyl-carrier-protein] and UDP-N-acetyl-alpha-D-glucosamine: step 2/6. Functionally, catalyzes the hydrolysis of UDP-3-O-myristoyl-N-acetylglucosamine to form UDP-3-O-myristoylglucosamine and acetate, the committed step in lipid A biosynthesis. This is UDP-3-O-acyl-N-acetylglucosamine deacetylase from Saccharophagus degradans (strain 2-40 / ATCC 43961 / DSM 17024).